The sequence spans 525 residues: Sucrose transport protein (525 aa).

Residues 1–37 (MAGRNIKNGENNKIAGSSLHLEKNPTTPPEAEATLKK) are Cytoplasmic-facing. A run of 12 helical transmembrane segments spans residues 38 to 58 (LGLV…QLSL), 72 to 92 (WAAY…PLVG), 107 to 127 (PFIA…GFAA), 145 to 165 (AIAV…TLQG), 184 to 204 (YANA…YAAG), 230 to 250 (SCFF…LSVV), 295 to 315 (MLIL…FLLF), 338 to 358 (GVHA…VMSL), 373 to 393 (LWGI…LVTK), 422 to 442 (LAIF…PFAL), 455 to 475 (GLSL…VSVT), and 488 to 508 (LPAF…SFTL). Topologically, residues 509–525 (LPSPPPEAKIGGSMGGH) are cytoplasmic.

The protein belongs to the glycoside-pentoside-hexuronide (GPH) cation symporter transporter (TC 2.A.2.4) family.

It localises to the membrane. Its pathway is glycan biosynthesis; sucrose metabolism. Its function is as follows. Responsible for the transport of sucrose into the cell, with the concomitant uptake of protons (symport system). Can also transport maltose at a lesser rate. The polypeptide is Sucrose transport protein (Spinacia oleracea (Spinach)).